The chain runs to 460 residues: ATP synthase subunit beta (460 aa).

150–157 (GGAGVGKT) contributes to the ATP binding site.

The protein belongs to the ATPase alpha/beta chains family. As to quaternary structure, F-type ATPases have 2 components, CF(1) - the catalytic core - and CF(0) - the membrane proton channel. CF(1) has five subunits: alpha(3), beta(3), gamma(1), delta(1), epsilon(1). CF(0) has three main subunits: a(1), b(2) and c(9-12). The alpha and beta chains form an alternating ring which encloses part of the gamma chain. CF(1) is attached to CF(0) by a central stalk formed by the gamma and epsilon chains, while a peripheral stalk is formed by the delta and b chains.

The protein localises to the cell inner membrane. The catalysed reaction is ATP + H2O + 4 H(+)(in) = ADP + phosphate + 5 H(+)(out). Its function is as follows. Produces ATP from ADP in the presence of a proton gradient across the membrane. The catalytic sites are hosted primarily by the beta subunits. The protein is ATP synthase subunit beta of Proteus mirabilis (strain HI4320).